The primary structure comprises 487 residues: ATP synthase subunit beta (487 aa).

164–171 is an ATP binding site; that stretch reads GGAGVGKT.

This sequence belongs to the ATPase alpha/beta chains family. F-type ATPases have 2 components, CF(1) - the catalytic core - and CF(0) - the membrane proton channel. CF(1) has five subunits: alpha(3), beta(3), gamma(1), delta(1), epsilon(1). CF(0) has four main subunits: a(1), b(1), b'(1) and c(9-12).

It is found in the cellular thylakoid membrane. It catalyses the reaction ATP + H2O + 4 H(+)(in) = ADP + phosphate + 5 H(+)(out). Functionally, produces ATP from ADP in the presence of a proton gradient across the membrane. The catalytic sites are hosted primarily by the beta subunits. This Synechococcus sp. (strain CC9311) protein is ATP synthase subunit beta.